We begin with the raw amino-acid sequence, 427 residues long: Lipophilic envelope-spanning tunnel protein A (427 aa).

Residues 1-75 (MALNTPQITP…LTRLAAMAFT (75 aa)) lie on the Cytoplasmic side of the membrane. A helical transmembrane segment spans residues 76 to 96 (MLLLMPFAWGEPLLHIWLLGI). The Periplasmic portion of the chain corresponds to 97-120 (RIDANVMQGIWQMTKQGDAITGSM). Residues 121–141 (VFFCVIGAPLILVTSIAYLWF) form a helical membrane-spanning segment. At 142 to 269 (GNRLGMNLRP…RHSLQKCWAA (128 aa)) the chain is on the cytoplasmic side. Residues 270-290 (LLASIVLLLPANLLPISIIYL) traverse the membrane as a helical segment. Topologically, residues 291-310 (NGGRQEDTILSGIMSLASSN) are periplasmic. A helical membrane pass occupies residues 311–331 (IAVAGIVFIASILVPFTKVIV). The Cytoplasmic segment spans residues 332–350 (MFTLLLSIHFKCQQGLRTR). The chain crosses the membrane as a helical span at residues 351–371 (ILLLRMVTWIGRWSMLDLFVI). At 372–382 (SLTMSLINRDQ) the chain is on the periplasmic side. The helical transmembrane segment at 383-403 (ILAFTMGPAAFYFGAAVILTI) threads the bilayer. Residues 404 to 427 (LAVEWLDSRLLWDAHESGNARFDD) are Cytoplasmic-facing.

This sequence belongs to the PqiA family. May interact with LetB in the inner membrane.

It localises to the cell inner membrane. Its function is as follows. Could be part, together with LetB, of a system that transports lipids between the inner membrane and the outer membrane. Contributes to membrane integrity. This is Lipophilic envelope-spanning tunnel protein A from Escherichia coli (strain K12).